Here is a 718-residue protein sequence, read N- to C-terminus: MSSDNIKVIVRCRPLNARETRENALNIIRMDEASAQVIVDPPEQEKSATQAKKVPRTFTFDAVYDQTSCNYGIFQASFKPLIDAVLEGFNSTIFAYGQTGAGKTWTMGGNKEEPGAIPNSFKHLFDAINSSSSNQNFLVIGSYLELYNEEIRDLIKNNTKLPLKEDKTRGIYVDGLSMHRVTTAAELSALMDKGFANRHVAATQMNDTSSRSHSIFMVRIECSEVIENKEVIRVGKLNLVDLAGSERQSKTGATGETLVEGAKINLSLSALGLVISKLVEGATHIPYRDSKLTRLLQDSLGGNSKTLMCANISPASTNYDETMSTLRYADRAKQIKNKPRINEDPKDAQIRQLRDHIARLEAQLAEAQANGAKPMDVLRIGKSLMKAINGDELNLDGTFQGTAGAKLSEARDGDSEGESTEEEIVFVEDEASRKAADELEAKRRALAEAKQKRESELEQKEALNKEAIVTLTDLKSQLSAIKNSVFVVKQLEIKDKVLGKAQQKLTTRQEKHNALQQALQNKQTEHQTKTAEILSAVEKLERLKADISKTEAEINEVNQEIDDITEQHALSIEEERRELKEVDKRSALLDAIIQTFIPQCEVAKAEALAEYDEETMKWAISPEKVDREHQMLLKRVRHMQILYPSGSTKPVFFGKGKDTRALVNFSQLSGNILELEPELPERMTVGEEMDGYQSYGMNEDEMHDTQLQMFYSQIDTYE.

The 331-residue stretch at 5-335 (NIKVIVRCRP…LRYADRAKQI (331 aa)) folds into the Kinesin motor domain. 97–104 (GQTGAGKT) contacts ATP. Residues G100, G102, K103, T104, and W105 each coordinate ADP. T104 serves as a coordination point for Mg(2+). A coiled-coil region spans residues 432-477 (SRKAADELEAKRRALAEAKQKRESELEQKEALNKEAIVTLTDLKSQ).

The protein belongs to the TRAFAC class myosin-kinesin ATPase superfamily. Kinesin family. Kinesin II subfamily. As to quaternary structure, monomer.

The protein resides in the cell projection. Its subcellular location is the cilium. The protein localises to the flagellum. It localises to the cytoplasm. It is found in the cytoskeleton. The protein resides in the flagellum axoneme. Its subcellular location is the flagellum basal body. Functionally, involved in anterograde intraflagellar transport (IFT). Involved in flagellar assembly. The chain is Kinesin-2a from Giardia intestinalis (strain ATCC 50803 / WB clone C6) (Giardia lamblia).